The sequence spans 748 residues: Peptidyl serine alpha-galactosyltransferase (748 aa).

The signal sequence occupies residues 1-26; the sequence is MVAVFHGPLVLGALLLLLALQHGASA. The Extracellular segment spans residues 27 to 710; sequence EEPGFANRTG…GPSLHSLLGR (684 aa). 3 N-linked (GlcNAc...) asparagine glycosylation sites follow: asparagine 33, asparagine 184, and asparagine 297. The region spanning 415 to 449 is the ShKT domain; that stretch reads CQDFHPKCEEWKESGECTKNENYMTENCRKTCDKC. Disulfide bonds link cysteine 415–cysteine 449, cysteine 422–cysteine 442, and cysteine 431–cysteine 446. Disordered stretches follow at residues 474-576 and 611-670; these read ELQP…ADPK and EVPK…KKNI. Positions 531–565 are enriched in pro residues; it reads SPPPSPPPASPPPVDSPPPMSPPPESPSPDKPPPK. Basic and acidic residues predominate over residues 611 to 637; that stretch reads EVPKRTKATDEEEEAPKAKHAESHLTL. The chain crosses the membrane as a helical span at residues 711-731; it reads LNTWQALVLWLVVVVAFLALV. Residues 732-748 lie on the Cytoplasmic side of the membrane; the sequence is PRIAKLRRRQRSGMRTE.

Requires Mn(2+) as cofactor.

It localises to the membrane. Its function is as follows. Glycosyltransferase involved in the O-galactosylation of several proteins including extensins. Catalyzes the transfer of alpha-galactosyl to Ser residues. Hydroxylation of proline residues adjacent to the serine acceptor is required for activity. Utilizes selectively UDP-galactose as a donor nucleotide sugar. This chain is Peptidyl serine alpha-galactosyltransferase, found in Chlamydomonas reinhardtii (Chlamydomonas smithii).